A 345-amino-acid polypeptide reads, in one-letter code: Phosphoribosylformylglycinamidine cyclo-ligase (345 aa).

Belongs to the AIR synthase family.

The protein localises to the cytoplasm. It catalyses the reaction 2-formamido-N(1)-(5-O-phospho-beta-D-ribosyl)acetamidine + ATP = 5-amino-1-(5-phospho-beta-D-ribosyl)imidazole + ADP + phosphate + H(+). The protein operates within purine metabolism; IMP biosynthesis via de novo pathway; 5-amino-1-(5-phospho-D-ribosyl)imidazole from N(2)-formyl-N(1)-(5-phospho-D-ribosyl)glycinamide: step 2/2. The chain is Phosphoribosylformylglycinamidine cyclo-ligase from Chromobacterium violaceum (strain ATCC 12472 / DSM 30191 / JCM 1249 / CCUG 213 / NBRC 12614 / NCIMB 9131 / NCTC 9757 / MK).